A 341-amino-acid chain; its full sequence is MRSVPEDFTTLISDLETFLTDVLKGENLSKKAKEKKDAFIKRIKDVKTSYAQEFKDRRDEEFPEPDEADTNDGGSLHSEQTDRDDENAYDGVQQSPPVAAQDLQAVLKSGYLEKRRKDHSFFGNEWQKRWCALNNSIFYYYGSEKDKQQKGEFNIVGYTVKMNNTLRKDAKRDCCFEVSAPDKRVYQFCAASEKEAKEWVEHIDFLIKDLGGIIPEDEEEYDDCLSMSQSEVAILPDDDIYEELPEEDVPQPSKPKVTLVNKPPPPATPVTAAVNKSTDYANYFQGLWDCIGDQPDELSFKRGDTIYILSKEYDMFGWWVGEMKGVIGIVPKEYLLELYVL.

The segment at F54–S95 is disordered. Positions E61 to T70 are enriched in acidic residues. A PH domain is found at A105 to K208. Positions E246–P265 are disordered. Positions D279–V340 constitute an SH3 domain.

It belongs to the SKAP family. Post-translationally, phosphorylated on tyrosines.

The protein localises to the cytoplasm. May be involved in B-cell and macrophage adhesion processes. May play a role in src signaling pathway. The polypeptide is Src kinase-associated phosphoprotein 2 (skap2) (Danio rerio (Zebrafish)).